Consider the following 152-residue polypeptide: Small ribosomal subunit protein bS16 (152 aa).

The interval 84-152 (WKWEASNNPQ…EAAAEEEKSE (69 aa)) is disordered. The span at 97-123 (PGQKAKELAAEKAEKEADRKAAEEEAK) shows a compositional bias: basic and acidic residues. Low complexity predominate over residues 124-144 (AAAAAPAAEEAPAEEAPAAEA).

This sequence belongs to the bacterial ribosomal protein bS16 family.

The chain is Small ribosomal subunit protein bS16 from Maricaulis maris (strain MCS10) (Caulobacter maris).